We begin with the raw amino-acid sequence, 575 residues long: Manganese transporter SMF1 (575 aa).

Residues 1-70 (MVNVGPSHAA…TYVSKRQVMR (70 aa)) lie on the Extracellular side of the membrane. Serine 24 bears the Phosphoserine mark. Residues lysine 33 and lysine 34 each participate in a glycyl lysine isopeptide (Lys-Gly) (interchain with G-Cter in ubiquitin) cross-link. A helical membrane pass occupies residues 71–91 (DIFAKYLKFIGPGLMVSVAYI). Residues 92–108 (DPGNYSTAVDAGASNQF) are Cytoplasmic-facing. A helical membrane pass occupies residues 109 to 129 (SLLCIILLSNFIAIFLQCLCI). Topologically, residues 130–156 (KLGSVTGLDLSRACREYLPRWLNWTLY) are extracellular. Residues 157 to 177 (FFAECAVIATDIAEVIGTAIA) traverse the membrane as a helical segment. Over 178–179 (LN) the chain is Cytoplasmic. Residues 180–200 (ILIKVPLPAGVAITVVDVFLI) form a helical membrane-spanning segment. At 201-218 (MFTYKPGASSIRFIRIFE) the chain is on the extracellular side. Residues 219 to 239 (CFVAVLVVGVCICFAIELAYI) form a helical membrane-spanning segment. Over 240–266 (PKSTSVKQVFRGFVPSAQMFDHNGIYT) the chain is Cytoplasmic. A helical membrane pass occupies residues 267-287 (AISILGATVMPHSLFLGSALV). Residues 288–344 (QPRLLDYDVKHGNYTVSEEQDKVKKSKSTEEIMEEKYFNYRPTNAAIKYCMKYSMVE) lie on the Extracellular side of the membrane. The helical transmembrane segment at 345-365 (LSITLFTLALFVNCAILVVAG) threads the bilayer. Residues 366 to 396 (STLYNSPEADGADLFTIHELLSRNLAPAAGT) are Cytoplasmic-facing. Residues 397 to 417 (IFMLALLLSGQSAGVVCTMSG) traverse the membrane as a helical segment. Residues 418-463 (QIVSEGHINWKLQPWQRRLATRCISIIPCLVISICIGREALSKALN) are Extracellular-facing. The helical transmembrane segment at 464 to 484 (ASQVVLSIVLPFLVAPLIFFT) threads the bilayer. Residues 485 to 543 (CKKSIMKTEITVDHTEEDSHNHQNNNDRSAGSVIEQDGSSGMEIENGKDVKIVYMANNW) lie on the Cytoplasmic side of the membrane. Residues 498–517 (HTEEDSHNHQNNNDRSAGSV) are disordered. The chain crosses the membrane as a helical span at residues 544–564 (IITVIAIIVWLFLSLLNVYAI). Topologically, residues 565 to 575 (VQLGMSHGDIS) are extracellular.

This sequence belongs to the NRAMP family.

It is found in the cell membrane. It carries out the reaction Mn(2+)(in) = Mn(2+)(out). In terms of biological role, high-affinity manganese transporter involved in manganese uptake from the extracellular environment. Also contributes to cellular accumulation of other divalent metal ions such as cadmium, cobalt, copper, iron and nickel. The protein is Manganese transporter SMF1 (SMF1) of Saccharomyces cerevisiae (strain ATCC 204508 / S288c) (Baker's yeast).